The sequence spans 202 residues: Probable septum site-determining protein MinC (202 aa).

Belongs to the MinC family. In terms of assembly, interacts with MinD and FtsZ.

Cell division inhibitor that blocks the formation of polar Z ring septums. Rapidly oscillates between the poles of the cell to destabilize FtsZ filaments that have formed before they mature into polar Z rings. Prevents FtsZ polymerization. The protein is Probable septum site-determining protein MinC of Sulfurihydrogenibium sp. (strain YO3AOP1).